The following is a 184-amino-acid chain: GMP synthase [glutamine-hydrolyzing] subunit A (184 aa).

One can recognise a Glutamine amidotransferase type-1 domain in the interval 3–184 (PLYVVNNHGQ…FENFDGICSE (182 aa)). Cys75 serves as the catalytic Nucleophile. Active-site residues include His162 and Glu164.

Heterodimer composed of a glutamine amidotransferase subunit (A) and a GMP-binding subunit (B).

The catalysed reaction is XMP + L-glutamine + ATP + H2O = GMP + L-glutamate + AMP + diphosphate + 2 H(+). It functions in the pathway purine metabolism; GMP biosynthesis; GMP from XMP (L-Gln route): step 1/1. Functionally, catalyzes the synthesis of GMP from XMP. The chain is GMP synthase [glutamine-hydrolyzing] subunit A from Methanoculleus marisnigri (strain ATCC 35101 / DSM 1498 / JR1).